Reading from the N-terminus, the 213-residue chain is Superoxide dismutase [Fe] (213 aa).

4 residues coordinate Fe cation: His26, His73, Asp156, and His160.

This sequence belongs to the iron/manganese superoxide dismutase family. Homodimer. Fe cation is required as a cofactor.

It catalyses the reaction 2 superoxide + 2 H(+) = H2O2 + O2. Destroys superoxide anion radicals which are normally produced within the cells and which are toxic to biological systems. This Helicobacter pylori (strain ATCC 700392 / 26695) (Campylobacter pylori) protein is Superoxide dismutase [Fe] (sodB).